We begin with the raw amino-acid sequence, 316 residues long: Fe-S cluster assembly protein dre2 (316 aa).

The N-terminal SAM-like domain stretch occupies residues 1–128 (MAPRCLLIGT…KPEQEEPVSI (128 aa)). The segment at 129–208 (PLKFGKNKAN…EDDLITEADM (80 aa)) is linker. Positions 141 to 177 (SATNGTNGAVNPDGSVPLNLNRKRDQPEPVKPAGVGF) are disordered. Positions 218, 229, 232, and 234 each coordinate [2Fe-2S] cluster. The segment at 218 to 234 (CQPKPGKRRRACKDCTC) is fe-S binding site A. 4 residues coordinate [4Fe-4S] cluster: Cys-279, Cys-282, Cys-290, and Cys-293. 2 consecutive short sequence motifs (cx2C motif) follow at residues 279 to 282 (CGNC) and 290 to 293 (CDGC). Residues 279-293 (CGNCALGDAFRCDGC) are fe-S binding site B.

It belongs to the anamorsin family. In terms of assembly, monomer. Interacts with TAH18. Interacts with MIA40. It depends on [2Fe-2S] cluster as a cofactor. The cofactor is [4Fe-4S] cluster.

It localises to the cytoplasm. It is found in the mitochondrion intermembrane space. Its function is as follows. Component of the cytosolic iron-sulfur (Fe-S) protein assembly (CIA) machinery required for the maturation of extramitochondrial Fe-S proteins. Part of an electron transfer chain functioning in an early step of cytosolic Fe-S biogenesis, facilitating the de novo assembly of a [4Fe-4S] cluster on the scaffold complex CFD1-NBP35. Electrons are transferred to DRE2 from NADPH via the FAD- and FMN-containing protein TAH18. TAH18-DRE2 are also required for the assembly of the diferric tyrosyl radical cofactor of ribonucleotide reductase (RNR), probably by providing electrons for reduction during radical cofactor maturation in the catalytic small subunit RNR2. In Pyrenophora tritici-repentis (strain Pt-1C-BFP) (Wheat tan spot fungus), this protein is Fe-S cluster assembly protein dre2.